Consider the following 460-residue polypeptide: Kynurenine 3-monooxygenase (460 aa).

FAD-binding positions include V13, 32–34 (DFR), and A53. Residues R83 and Y97 each coordinate L-kynurenine. Residues R109, L133, Y195, D314, and 325–328 (QGMN) each bind FAD. L-kynurenine contacts are provided by N373 and Y408.

This sequence belongs to the aromatic-ring hydroxylase family. KMO subfamily. It depends on FAD as a cofactor.

It localises to the mitochondrion outer membrane. The catalysed reaction is L-kynurenine + NADPH + O2 + H(+) = 3-hydroxy-L-kynurenine + NADP(+) + H2O. It participates in cofactor biosynthesis; NAD(+) biosynthesis; quinolinate from L-kynurenine: step 1/3. Catalyzes the hydroxylation of L-kynurenine (L-Kyn) to form 3-hydroxy-L-kynurenine (L-3OHKyn). Required for synthesis of quinolinic acid. The sequence is that of Kynurenine 3-monooxygenase from Saccharomyces cerevisiae (strain ATCC 204508 / S288c) (Baker's yeast).